A 211-amino-acid polypeptide reads, in one-letter code: uncharacterized protein (211 aa).

This is an uncharacterized protein from Lactuca sativa (Garden lettuce).